The primary structure comprises 692 residues: MQNSEGGADSPATVALRPAAQPVPASPQRVLVQAAGSTPKGTPMQTLTLPRVQPVPPQVQHVYPAQVQYVEGGDAVYANGAIRAAYTYNPDPQLYAPSSAASYFETPGGAQVTVAASSPPAVPSHGMVGITMDVSGTPIVSGAGTYLIHGGMDSTRHSLAHTARSSPATLQWLLDNYETAEGVSLPRSSLYNHYLRHCQEHKLEPVNAASFGKLIRSVFMGLRTRRLGTRGNSKYHYYGIRLKPDSPLNRLQEDTQYMAMRQQPTHQKPRYRPAQKSDSLGDGSAHSNMHSTPEQAMAAQGQHHQQYIDVSHVFPEFPAPDLGSTLLQESVTLHDVKALQLVYRRHCEATLDVVMNLQFQYIEKLWLSFWNCKATSSDGRASLPASDEEPEVTLLPKDKLISLCKCEPILQWMRSCDHILYQALVETLIPDVLRPVPSSLTQAIRNFAKSLEGWLINAMSGFPQQVIQTKVGVVSAFAQTLRRYTSLNHLAQAARAVLQNTSQINQMLSDLNRVDFANVQEQASWVCQCEESLVQRLEHDFKVTLQQQSSLDQWASWLDNVVTQVLKQHAGSPSFPKAARQFLLKWSFYSSMVIRDLTLRSAASFGSFHLIRLLYDEYMFYLVEHRVAQATGETPIAVMGEFNDLASLSLTLLDKEDIGDGHSSEADVDGRSLGEPLVKRERSDPSHPLQGI.

Positions 1–26 (MQNSEGGADSPATVALRPAAQPVPAS) are disordered. A Phosphoserine modification is found at Ser26. Positions 169–244 (TLQWLLDNYE…YHYYGIRLKP (76 aa)) form a DNA-binding region, RFX-type winged-helix. The segment at 261-296 (RQQPTHQKPRYRPAQKSDSLGDGSAHSNMHSTPEQA) is disordered. Positions 285 to 294 (AHSNMHSTPE) are enriched in polar residues. Position 386 is a phosphoserine (Ser386). Over residues 660–685 (DGHSSEADVDGRSLGEPLVKRERSDP) the composition is skewed to basic and acidic residues. A disordered region spans residues 660–692 (DGHSSEADVDGRSLGEPLVKRERSDPSHPLQGI).

The protein belongs to the RFX family. In terms of assembly, homodimer; probably only forms homodimers in testis. Heterodimer; heterodimerizes with RFX1 and RFX3. Expressed at highest level in testis. Expressed at lower level in thymus. Also expressed in stomach, kidney, liver, brain and heart. Weakly expressed in spleen and lung. Within testis, most abundantly present in spermatocytes: present from pachytene spermatocytes to early spermatids (at protein level). Also present in non-germinal tissues.

The protein localises to the nucleus. Its subcellular location is the cytoplasm. Transcription factor that acts as a key regulator of spermatogenesis. Acts by regulating expression of genes required for the haploid phase during spermiogenesis, such as genes required for cilium assembly and function. Recognizes and binds the X-box, a regulatory motif with DNA sequence 5'-GTNRCC(0-3N)RGYAAC-3' present on promoters. Probably activates transcription of the testis-specific histone gene H1-6. The chain is DNA-binding protein RFX2 (Rfx2) from Rattus norvegicus (Rat).